The primary structure comprises 731 residues: Putative pentatricopeptide repeat-containing protein At1g17630 (731 aa).

15 PPR repeats span residues Ser-88–Val-118, Asp-122–Gly-156, Asp-157–Glu-191, Asn-192–Arg-222, Asn-223–Pro-257, Asp-258–Val-292, Ser-293–Glu-327, Tyr-328–Lys-358, Gly-359–Cys-393, Asn-398–Ala-432, Asn-433–Glu-467, Asn-468–Lys-498, Asp-499–Pro-533, Asp-534–Pro-569, and Gln-570–Glu-600. The segment at Val-605–Lys-680 is type E motif. The type E(+) motif stretch occupies residues Lys-681 to Leu-711.

The protein belongs to the PPR family. PCMP-E subfamily.

The chain is Putative pentatricopeptide repeat-containing protein At1g17630 (PCMP-E72) from Arabidopsis thaliana (Mouse-ear cress).